Consider the following 238-residue polypeptide: Purine nucleoside phosphorylase DeoD-type (238 aa).

An a purine D-ribonucleoside-binding site is contributed by H4. Phosphate is bound by residues G20, R24, R43, and 87-90 (RIGS). A purine D-ribonucleoside contacts are provided by residues 181-183 (EME) and 205-206 (SD). The active-site Proton donor is D206.

This sequence belongs to the PNP/UDP phosphorylase family. In terms of assembly, homohexamer; trimer of homodimers.

It carries out the reaction a purine D-ribonucleoside + phosphate = a purine nucleobase + alpha-D-ribose 1-phosphate. The enzyme catalyses a purine 2'-deoxy-D-ribonucleoside + phosphate = a purine nucleobase + 2-deoxy-alpha-D-ribose 1-phosphate. Its function is as follows. Catalyzes the reversible phosphorolytic breakdown of the N-glycosidic bond in the beta-(deoxy)ribonucleoside molecules, with the formation of the corresponding free purine bases and pentose-1-phosphate. The polypeptide is Purine nucleoside phosphorylase DeoD-type (Mycoplasma pneumoniae (strain ATCC 29342 / M129 / Subtype 1) (Mycoplasmoides pneumoniae)).